The chain runs to 641 residues: Chaperone protein DnaK (641 aa).

Phosphothreonine; by autocatalysis is present on T199. A disordered region spans residues 602-641 (MYADQADQAQQAGGQEEGQAKSADDAVDAEFEEVKDDDKK). Over residues 604 to 615 (ADQADQAQQAGG) the composition is skewed to low complexity. Acidic residues predominate over residues 626–641 (DAVDAEFEEVKDDDKK).

This sequence belongs to the heat shock protein 70 family.

Its function is as follows. Acts as a chaperone. The sequence is that of Chaperone protein DnaK from Marinobacter nauticus (strain ATCC 700491 / DSM 11845 / VT8) (Marinobacter aquaeolei).